We begin with the raw amino-acid sequence, 328 residues long: Tetraacyldisaccharide 4'-kinase (328 aa).

An ATP-binding site is contributed by 55 to 62; the sequence is TAGGNGKT.

It belongs to the LpxK family.

The catalysed reaction is a lipid A disaccharide + ATP = a lipid IVA + ADP + H(+). It participates in glycolipid biosynthesis; lipid IV(A) biosynthesis; lipid IV(A) from (3R)-3-hydroxytetradecanoyl-[acyl-carrier-protein] and UDP-N-acetyl-alpha-D-glucosamine: step 6/6. Transfers the gamma-phosphate of ATP to the 4'-position of a tetraacyldisaccharide 1-phosphate intermediate (termed DS-1-P) to form tetraacyldisaccharide 1,4'-bis-phosphate (lipid IVA). The protein is Tetraacyldisaccharide 4'-kinase of Shigella dysenteriae serotype 1 (strain Sd197).